A 93-amino-acid chain; its full sequence is uncharacterized protein (93 aa).

The next 3 helical transmembrane spans lie at 15-35 (MAGLRVLSSMIELTAAIVMLV), 48-68 (ILAIVGPLIFIITMTVGIYQI), and 72-92 (LSYAKLILIFTGVVLILAGVH).

It localises to the cell membrane. This is an uncharacterized protein from Bacillus subtilis (strain 168).